The primary structure comprises 382 residues: Caspase-1-B (382 aa).

Residues 1-98 (MTAQLNKVRK…HEHAPSPIQE (98 aa)) constitute a propeptide that is removed on maturation. Active-site residues include H216 and C270. Residues 283–292 (DVAPAPLEDD) constitute a propeptide that is removed on maturation.

This sequence belongs to the peptidase C14A family. As to quaternary structure, heterotetramer that consists of two anti-parallel arranged heterodimers, each one formed by a 20 kDa (Caspase-1 subunit p20) and a 10 kDa (Caspase-1 subunit p10) subunit. In terms of assembly, heterotetramer that consists of two anti-parallel arranged heterodimers, each one formed by a 20 kDa (Caspase-1 subunit p20) and a 10 kDa (Caspase-1 subunit p10) subunit. Can form a heterodimer with isoform epsilon which then has an inhibitory effect. Post-translationally, the two subunits are derived from the precursor sequence by an autocatalytic mechanism.

The protein resides in the cytoplasm. The protein localises to the cell membrane. The enzyme catalyses Strict requirement for an Asp residue at position P1 and has a preferred cleavage sequence of Tyr-Val-Ala-Asp-|-.. Functionally, thiol protease involved in a variety of inflammatory processes by proteolytically cleaving other proteins, such as the precursors of the inflammatory cytokines interleukin-1 beta (IL1B) and interleukin 18 (IL18) as well as the pyroptosis inducer Gasdermin-D (GSDMD), into active mature peptides. Plays a key role in cell immunity as an inflammatory response initiator: once activated through formation of an inflammasome complex, it initiates a pro-inflammatory response through the cleavage of the two inflammatory cytokines IL1B and IL18, releasing the mature cytokines which are involved in a variety of inflammatory processes. Cleaves a tetrapeptide after an Asp residue at position P1. Also initiates pyroptosis, a programmed lytic cell death pathway, through cleavage of GSDMD. The protein is Caspase-1-B (casp1-b) of Xenopus laevis (African clawed frog).